The primary structure comprises 329 residues: Nitrogenase iron-iron protein beta chain (329 aa).

4 residues coordinate [8Fe-7S] cluster: cysteine 20, cysteine 45, cysteine 104, and serine 143. The interval 213–288 (SADGSLVSHG…EEGDGKPIPQ (76 aa)) is disordered. Over residues 257-271 (RSRRSSARPRSHPQY) the composition is skewed to basic residues.

Belongs to the NifD/NifK/NifE/NifN family. Hexamer of two alpha, two beta, and two delta chains. It depends on [8Fe-7S] cluster as a cofactor.

The enzyme catalyses N2 + 8 reduced [2Fe-2S]-[ferredoxin] + 16 ATP + 16 H2O = H2 + 8 oxidized [2Fe-2S]-[ferredoxin] + 2 NH4(+) + 16 ADP + 16 phosphate + 6 H(+). Functionally, this iron-iron protein is part of the nitrogenase complex that catalyzes the key enzymatic reactions in nitrogen fixation. Other nitrogenase complexes utilize a molybdenum-iron protein or a vanadium-iron protein. The chain is Nitrogenase iron-iron protein beta chain (anfK) from Ruminiclostridium hungatei (Clostridium hungatei).